The primary structure comprises 341 residues: MSITPQEALQRCIEHRELFHDEMTAMMRLIMSGEMSPELVAGLLIALRTKKETVGEIAAAAQVMREFATSVQVDDRTHLVDVVGTGGDGAHTFNISTAAMFVAAGTGAKIAKHGNRSVSSKSGSADVLEALGVNLALSADQVAKCISTVGTGFMFAPNHHPAMKNVVPIRKQLGVRTIFNILGPLTNPADAKRILMGVFHPDLVGIQARVLQALGMEHALVVYGRGGLDEISLGGPTLVGELKDGVVREYEIHPKDFGLNTAPTNSFKVANAEESKKIVLDVLDGKPGPASDIVCLNAGATLYVAGIAKSIASGIALAKTAITSGAARQKLDTFVVTTQSK.

5-phospho-alpha-D-ribose 1-diphosphate is bound by residues G84, 87-88, T92, 94-97, 112-120, and S124; these read GD, NIST, and KHGNRSVSS. Anthranilate is bound at residue G84. S96 contributes to the Mg(2+) binding site. N115 contacts anthranilate. Position 170 (R170) interacts with anthranilate. Mg(2+) is bound by residues D229 and E230.

It belongs to the anthranilate phosphoribosyltransferase family. As to quaternary structure, homodimer. The cofactor is Mg(2+).

The enzyme catalyses N-(5-phospho-beta-D-ribosyl)anthranilate + diphosphate = 5-phospho-alpha-D-ribose 1-diphosphate + anthranilate. It participates in amino-acid biosynthesis; L-tryptophan biosynthesis; L-tryptophan from chorismate: step 2/5. Its function is as follows. Catalyzes the transfer of the phosphoribosyl group of 5-phosphorylribose-1-pyrophosphate (PRPP) to anthranilate to yield N-(5'-phosphoribosyl)-anthranilate (PRA). The polypeptide is Anthranilate phosphoribosyltransferase (Polynucleobacter necessarius subsp. necessarius (strain STIR1)).